Here is a 548-residue protein sequence, read N- to C-terminus: Sesquiterpene synthase 9 (548 aa).

Mg(2+) is bound by residues Asp300, Asp304, and Glu453. Positions 300-304 (DDTFD) match the DDXXD motif motif.

Belongs to the terpene synthase family. Tpsa subfamily. Mg(2+) is required as a cofactor. It depends on Mn(2+) as a cofactor. In terms of tissue distribution, mostly expressed in stem and trichomes, to a lower extent in roots, leaves and flowers and, at low levels, in fruits.

Its subcellular location is the cytoplasm. The catalysed reaction is (2E,6E)-farnesyl diphosphate = germacrene C + diphosphate. The enzyme catalyses (2E)-geranyl diphosphate = terpinolene + diphosphate. It catalyses the reaction (2E)-geranyl diphosphate = limonene + diphosphate. It carries out the reaction (2E)-geranyl diphosphate = beta-myrcene + diphosphate. The catalysed reaction is (2Z,6Z)-farnesyl diphosphate = germacrene C + diphosphate. The protein operates within secondary metabolite biosynthesis; terpenoid biosynthesis. Involved in the biosynthesis of germacrene C, one of the most abundant sesquiterpene in the leaf oil of tomato. Produces mainly germacrene C, but also smaller amounts of germacrene A, B and D when used with farnesyl diphosphate (FPP) as substrate; able to use both (2E,6E)-farnesyl diphosphate ((EE)-FPP) and (2Z,6Z)-farnesyl diphosphate ((ZZ)-FPP). No or low activity with geranylgeranyl diphosphate (GGPP). Can act with a low efficiency as a monoterpene synthase with geranyl diphosphate (GPP) as substrate, thus producing beta-myrcene, limonene and terpinolene. This is Sesquiterpene synthase 9 from Solanum lycopersicum (Tomato).